The primary structure comprises 350 residues: Geranylgeranyl diphosphate synthase (350 aa).

Residues lysine 70, arginine 73, and histidine 102 each coordinate isopentenyl diphosphate. Residues aspartate 109 and aspartate 113 each contribute to the Mg(2+) site. Residues 109 to 113 (DDVMD) carry the DDXXD motif motif. An isopentenyl diphosphate-binding site is contributed by arginine 119. The short motif at 240-244 (DDLIG) is the DDXXD motif element.

Belongs to the FPP/GGPP synthase family. Mg(2+) serves as cofactor.

The catalysed reaction is isopentenyl diphosphate + (2E,6E)-farnesyl diphosphate = (2E,6E,10E)-geranylgeranyl diphosphate + diphosphate. It functions in the pathway isoprenoid biosynthesis; geranylgeranyl diphosphate biosynthesis; geranylgeranyl diphosphate from farnesyl diphosphate and isopentenyl diphosphate: step 1/1. Catalyzes the condensation of isopentenyl pyrophosphate (IPP) with (2E,6E)-farnesyl diphosphate (E,E-FPP) to yield geranylgeranyl diphosphate (GGPP). This is Geranylgeranyl diphosphate synthase from Mycobacterium tuberculosis (strain ATCC 25618 / H37Rv).